The chain runs to 156 residues: Small ribosomal subunit protein uS7 (156 aa).

It belongs to the universal ribosomal protein uS7 family. In terms of assembly, part of the 30S ribosomal subunit. Contacts proteins S9 and S11.

Functionally, one of the primary rRNA binding proteins, it binds directly to 16S rRNA where it nucleates assembly of the head domain of the 30S subunit. Is located at the subunit interface close to the decoding center, probably blocks exit of the E-site tRNA. The chain is Small ribosomal subunit protein uS7 from Gemmatimonas aurantiaca (strain DSM 14586 / JCM 11422 / NBRC 100505 / T-27).